The primary structure comprises 309 residues: Wnt inhibitor of Dorsal protein (309 aa).

An N-terminal signal peptide occupies residues 1-16 (MIFAITFFMGITSTLA). Disulfide bonds link Cys-51–Cys-62, Cys-102–Cys-110, Cys-112–Cys-121, Cys-162–Cys-179, Cys-164–Cys-174, Cys-232–Cys-269, Cys-248–Cys-262, Cys-266–Cys-308, Cys-284–Cys-299, and Cys-286–Cys-296.

This sequence belongs to the Wnt family.

It localises to the secreted. It is found in the extracellular space. The protein localises to the extracellular matrix. Binds as a ligand to a family of frizzled seven-transmembrane receptors and acts through a cascade of genes on the nucleus. This is Wnt inhibitor of Dorsal protein (wntD) from Drosophila melanogaster (Fruit fly).